Consider the following 526-residue polypeptide: AAA ATPase forming ring-shaped complexes (526 aa).

Over residues 1 to 18 (MGDMASSTDPAAHNSFSD) the composition is skewed to polar residues. A disordered region spans residues 1–20 (MGDMASSTDPAAHNSFSDFN). Positions 20–59 (NREEMTRLADNVRSLQRTNQDLSARNTKLAEMLKSSRDKL) form a coiled coil. 257–262 (GCGKTL) is a binding site for ATP.

Belongs to the AAA ATPase family. In terms of assembly, homohexamer. Assembles into a hexameric ring structure.

This is AAA ATPase forming ring-shaped complexes from Corynebacterium efficiens (strain DSM 44549 / YS-314 / AJ 12310 / JCM 11189 / NBRC 100395).